Consider the following 422-residue polypeptide: Dipeptidase aclJ (422 aa).

Residues 28–45 (LAYSVTLTLVALFFTFAL) traverse the membrane as a helical segment. The Zn(2+) site is built by histidine 77 and aspartate 79. N-linked (GlcNAc...) asparagine glycosylation is present at asparagine 96. Cysteine 128 and cysteine 219 form a disulfide bridge. Glutamate 190 lines the Zn(2+) pocket. Histidine 217 lines the substrate pocket. Asparagine 270 carries N-linked (GlcNAc...) asparagine glycosylation. The cysteines at positions 287 and 319 are disulfide-linked. Positions 291 and 351 each coordinate substrate.

The protein belongs to the metallo-dependent hydrolases superfamily. Peptidase M19 family. It depends on Zn(2+) as a cofactor.

The protein resides in the membrane. The enzyme catalyses an L-aminoacyl-L-amino acid + H2O = 2 an L-alpha-amino acid. It participates in mycotoxin biosynthesis. Its function is as follows. Dipeptidase; part of the gene cluster that mediates the biosynthesis of aspirochlorine (or antibiotic A30641), an unusual halogenated spiro compound with distinctive antifungal properties due to selective inhibition of protein biosynthesis, and which is also active against bacteria, viruses, and murine tumor cells. The non-ribosomal peptide synthetase (NRPS) aclP is responsible the formation of the diketopiperazine (DKP) core from the condensation of 2 phenylalanine residues. One Phe residue is tailored into chlorotyrosine by hydroxylation and chlorination, whereas the second Phe undergoes an unprecedented C-C bond cleavage to be converted into glycine. After formation of the DKP, sulfur is incorporated into the DKP by conjugation with glutathione by aclG, followed by its stepwise degradation to the thiol by aclI, aclJ and aclK, and the dithiol oxidation by aclT. In addition, oxygenases (aclB, aclC, aclL and aclO) and O-methyltransferases (aclM and aclU) act as tailoring enzymes to produce the intermediate dechloroaspirochlorine. Ultimately, chlorination of dechloroaspirochlorine by the halogenase aclH is the last step in the aspirochlorine pathway. The chain is Dipeptidase aclJ from Aspergillus oryzae (strain ATCC 42149 / RIB 40) (Yellow koji mold).